Consider the following 85-residue polypeptide: Alpha-conotoxin Lt28.1 (85 aa).

The N-terminal stretch at 1–21 is a signal peptide; the sequence is MPKLEMMLLVLLILPLCYIDA. The propeptide occupies 22–40; sequence VGPPPPWNMEDEIIEHWQK. 4 cysteine pairs are disulfide-bonded: cysteine 61-cysteine 74, cysteine 66-cysteine 84, cysteine 67-cysteine 79, and cysteine 72-cysteine 81.

This sequence belongs to the conotoxin D superfamily. In terms of tissue distribution, expressed by the venom duct.

The protein localises to the secreted. Its function is as follows. Alpha-conotoxins act on postsynaptic membranes, they bind to the nicotinic acetylcholine receptors (nAChR) and thus inhibit them. This toxin weakly inhibits alpha-9-alpha-10/CHRNA9-CHRNA10 nAChRs (IC(50)=3 uM). The chain is Alpha-conotoxin Lt28.1 from Conus litteratus (Lettered cone).